We begin with the raw amino-acid sequence, 214 residues long: MSSESMKNKHRNSKRTPSPLQKERRRNWESHKSRSRSPIRRHGEKNLEYAHHSNQENRQSSYTALKTSDQATKTKEKTSGGNRTNPYTVFSQHRANHSDAPGWCGFYWHSTRLARDGTNCIFNEMKQEFQELQINGKITWDNARELLFSQKKKLDQKYRNMLYHFRHSPDCPRCDYWDNVYRRHLAHVSSQESEEVTDEEMLSAVESMDTNASN.

Disordered regions lie at residues 1 to 87 and 192 to 214; these read MSSE…TNPY and ESEE…NASN. Positions 33 to 43 are enriched in basic residues; the sequence is SRSRSPIRRHG. A compositionally biased stretch (basic and acidic residues) spans 44 to 55; sequence EKNLEYAHHSNQ. Residues 56-71 show a composition bias toward polar residues; sequence ENRQSSYTALKTSDQA. A compositionally biased stretch (acidic residues) spans 192 to 201; that stretch reads ESEEVTDEEM.

Belongs to the Bocaparvovirus Non-structural protein NP-1 family.

It localises to the host nucleus. In terms of biological role, required for the expression of the capsid proteins. Performs the splicing and internal polyadenylation of the viral capsid-encoding mRNA precursor, which allows its maturation and expression. Transactivates the viral promoter. This Human bocavirus 2 (HBoV2) protein is Non-structural protein NP-1 (NP1).